A 129-amino-acid chain; its full sequence is Follitropin subunit beta (129 aa).

An N-terminal signal peptide occupies residues 1-20; that stretch reads MKTAQFYVLFFCWKAIWCNG. Cystine bridges form between Cys-21/Cys-69, Cys-35/Cys-84, Cys-38/Cys-122, Cys-46/Cys-100, Cys-50/Cys-102, and Cys-105/Cys-112. N-linked (GlcNAc...) asparagine glycans are attached at residues Asn-25 and Asn-42.

The protein belongs to the glycoprotein hormones subunit beta family. Heterodimer. The active follitropin is a heterodimer composed of an alpha chain/CGA shared with other hormones and a unique beta chain/FSHB shown here.

The protein localises to the secreted. Functionally, together with the alpha chain CGA constitutes follitropin, the follicle-stimulating hormone, and provides its biological specificity to the hormone heterodimer. Binds FSHR, a G protein-coupled receptor, on target cells to activate downstream signaling pathways. Follitropin is involved in follicle development and spermatogenesis in reproductive organs. The protein is Follitropin subunit beta (FSHB) of Trichosurus vulpecula (Brush-tailed possum).